The sequence spans 783 residues: Na(+)/H(+) exchanger protein 7 (783 aa).

A helical transmembrane segment spans residues 1-18; that stretch reads MWIKLLFFFTTLLVSTSG. Residues 19 to 108 are Extracellular-facing; the sequence is LGDDGITALL…WHWDYVKNEL (90 aa). The chain crosses the membrane as a helical span at residues 109–129; sequence VLTLFFIVIGLFKLVYHHTFV. Topologically, residues 130–132 are cytoplasmic; it reads TRK. The chain crosses the membrane as a helical span at residues 133–153; that stretch reads ILPESCCLIFIGIAIGFFFVG. Over 154 to 159 the chain is Extracellular; sequence DATHAS. The helical transmembrane segment at 160–180 threads the bilayer; that stretch reads IKFLEFKSKVFFFYLLPPIIL. The Cytoplasmic portion of the chain corresponds to 181-206; sequence ESAYSLKDRAFIENIGTILLYAVVGT. The chain crosses the membrane as a helical span at residues 207–227; sequence ILNIVLLAAALLILIWVGIMG. The Extracellular segment spans residues 228-235; it reads KYNLSVMD. The helical transmembrane segment at 236 to 256 threads the bilayer; sequence ILTFASLVAAVDPVAVLAVFQ. Over 257–262 the chain is Cytoplasmic; sequence EVGVNK. A helical membrane pass occupies residues 263–283; the sequence is MLYFMVFGESLFNDAVTIVCY. Residues 284–299 are Extracellular-facing; sequence NLAIEFQTLPDFTWYH. The chain crosses the membrane as a helical span at residues 300-320; it reads GFLGLLSFLCVSIGGLIIGLI. The Cytoplasmic segment spans residues 321–350; it reads CGAISSFVTKFTTDVRVVEPVVLFGMAYLA. A helical membrane pass occupies residues 351-371; that stretch reads YLGSEMFHFSGIIALIACGLF. Residues 372 to 390 are Extracellular-facing; the sequence is QTHYACCNISYKSFTSVMY. N-linked (GlcNAc...) asparagine glycosylation is present at Asn379. Positions 391 to 411 form an intramembrane region, helical; that stretch reads ITKVCSTLCESLIFIILGVML. Residues 412 to 424 lie on the Extracellular side of the membrane; the sequence is VNEREWFWTDWHP. A helical transmembrane segment spans residues 425 to 445; sequence VFSAVSVVLCVVVRFGVTFFL. Residues 446-464 lie on the Cytoplasmic side of the membrane; sequence TYFVNQFTGGVRHISFQEQ. A helical transmembrane segment spans residues 465 to 485; that stretch reads FIMSYGGLRGAVSFSLVFMIS. Residues 486 to 492 lie on the Extracellular side of the membrane; sequence ANPDVKN. The helical transmembrane segment at 493-513 threads the bilayer; sequence TMLGATYAVILFTNIIQGSTI. Topologically, residues 514-783 are cytoplasmic; it reads KLFVKWLNIR…TITESEETSF (270 aa). Positions 649 to 702 form a coiled coil; sequence DNEDADQRANELIKDVSSIRQLMHNPFEDCYLDRNLTHEEEKEQARLKMKKTRA. Positions 745 to 783 are disordered; that stretch reads RPSTSTRVSVEDEEQGLTMKEMEEEHPLMTITESEETSF.

Belongs to the monovalent cation:proton antiporter 1 (CPA1) transporter (TC 2.A.36) family. As to quaternary structure, interacts (via C-terminus) with cmd-1. In terms of tissue distribution, detected in the posterior cells of the intestine.

It localises to the basolateral cell membrane. In terms of biological role, na+/H+ exchanger which mediates the transient acidification of the coelomic space and plays a role in contraction of posterior body muscles during defecation. Probably by regulating the defecation motor program, required for fatty acid uptake by intestinal cells. This is Na(+)/H(+) exchanger protein 7 from Caenorhabditis elegans.